We begin with the raw amino-acid sequence, 258 residues long: Large ribosomal subunit protein uL5c (258 aa).

Residues 1–38 (MASTSLLQSTSSSFAGVRFHCRTSAAPRVGLSSFTVKA) constitute a chloroplast transit peptide.

In terms of assembly, component of the chloroplast large ribosomal subunit (LSU). Mature 70S chloroplast ribosomes of higher plants consist of a small (30S) and a large (50S) subunit. The 30S small subunit contains 1 molecule of ribosomal RNA (16S rRNA) and 24 different proteins. The 50S large subunit contains 3 rRNA molecules (23S, 5S and 4.5S rRNA) and 33 different proteins.

It is found in the plastid. Its subcellular location is the chloroplast. In terms of biological role, component of the chloroplast ribosome (chloro-ribosome), a dedicated translation machinery responsible for the synthesis of chloroplast genome-encoded proteins, including proteins of the transcription and translation machinery and components of the photosynthetic apparatus. This chain is Large ribosomal subunit protein uL5c (RPL5), found in Spinacia oleracea (Spinach).